Here is a 736-residue protein sequence, read N- to C-terminus: Dimethylamine dehydrogenase (736 aa).

S-6-FMN cysteine is present on C31. 176–179 (YGAH) contributes to the substrate binding site. Y181 serves as the catalytic Proton donor. FMN contacts are provided by R229 and R329. Residues C352, C355, C358, and C371 each contribute to the [4Fe-4S] cluster site. 398–427 (DVLIVGAGPAGSECARVLMERGYTVHLVDT) is an ADP binding site.

The protein in the N-terminal section; belongs to the NADH:flavin oxidoreductase/NADH oxidase family. The cofactor is FMN. Requires [4Fe-4S] cluster as cofactor.

It catalyses the reaction dimethylamine + oxidized [electron-transfer flavoprotein] + H2O + H(+) = methylamine + reduced [electron-transfer flavoprotein] + formaldehyde. This is Dimethylamine dehydrogenase (dmd) from Hyphomicrobium sp. (strain x).